The following is a 331-amino-acid chain: Myc-associated zinc finger protein (331 aa).

Disordered stretches follow at residues 46–65 (AQSP…APAA) and 108–131 (TVDT…SAPA). Pro residues predominate over residues 117 to 127 (PPAPPPPPPAV). 4 consecutive C2H2-type zinc fingers follow at residues 177 to 199 (YICA…EAIH), 266 to 288 (HACE…KLSH), 294 to 316 (YQCP…VRSH), and 324 to 331 (YNCSHCGK).

As to quaternary structure, interacts with BPTF. In terms of tissue distribution, ubiquitously expressed.

The protein localises to the nucleus. In terms of biological role, transcriptional regulator. Acts as a transcriptional activator that binds to purine-rich GAGA sites found in the promoter of many genes including insulin I and II and islet amyloid polypeptide. In Mesocricetus auratus (Golden hamster), this protein is Myc-associated zinc finger protein (MAZ).